We begin with the raw amino-acid sequence, 837 residues long: Protein translocase subunit SecA (837 aa).

ATP is bound by residues glutamine 85, 103–107 (GEGKT), and aspartate 493. The Zn(2+) site is built by cysteine 821, cysteine 823, cysteine 832, and histidine 833.

This sequence belongs to the SecA family. As to quaternary structure, monomer and homodimer. Part of the essential Sec protein translocation apparatus which comprises SecA, SecYEG and auxiliary proteins SecDF. Other proteins may also be involved. The cofactor is Zn(2+).

The protein resides in the cell membrane. Its subcellular location is the cytoplasm. The catalysed reaction is ATP + H2O + cellular proteinSide 1 = ADP + phosphate + cellular proteinSide 2.. In terms of biological role, part of the Sec protein translocase complex. Interacts with the SecYEG preprotein conducting channel. Has a central role in coupling the hydrolysis of ATP to the transfer of proteins into and across the cell membrane, serving as an ATP-driven molecular motor driving the stepwise translocation of polypeptide chains across the membrane. This Streptococcus pneumoniae (strain ATCC BAA-255 / R6) protein is Protein translocase subunit SecA.